The chain runs to 423 residues: Tyrosine--tRNA ligase (423 aa).

L-tyrosine is bound at residue tyrosine 35. Positions 40-49 (PTAPSLHAGH) match the 'HIGH' region motif. Tyrosine 170 and glutamine 174 together coordinate L-tyrosine. Positions 230 to 234 (KFGKS) match the 'KMSKS' region motif. Residue lysine 233 participates in ATP binding. The region spanning 355 to 412 (DLITDLLVATGLSASKGAARRTIAEGGVSVNNVKIDSDEWTPQASDFLHGRWLVLRRG) is the S4 RNA-binding domain.

It belongs to the class-I aminoacyl-tRNA synthetase family. TyrS type 1 subfamily. Homodimer.

The protein localises to the cytoplasm. The enzyme catalyses tRNA(Tyr) + L-tyrosine + ATP = L-tyrosyl-tRNA(Tyr) + AMP + diphosphate + H(+). In terms of biological role, catalyzes the attachment of tyrosine to tRNA(Tyr) in a two-step reaction: tyrosine is first activated by ATP to form Tyr-AMP and then transferred to the acceptor end of tRNA(Tyr). This chain is Tyrosine--tRNA ligase, found in Mycobacterium sp. (strain JLS).